The chain runs to 123 residues: MACRCLSFLLMGTFLSVSQTVLAQLDALLVFPGQVAQLSCTLSPQHVTIRDYGVSWYQQRAGSAPRYLLYYRSEEDHHRPADIPDRFSAAKDEAHNACVLTISPVQPEDDADYYCSVGYGFSP.

The first 20 residues, Met-1–Thr-20, serve as a signal peptide directing secretion. The region spanning Val-21–Pro-123 is the Ig-like domain. The cysteines at positions 40 and 115 are disulfide-linked.

This sequence belongs to the immunoglobulin superfamily. As to expression, expressed in B-cell precursors. Expressed in fetal liver, bone marrow, spleen and lymph node.

Functionally, associates with the Ig-mu chain to form a molecular complex that is expressed on the surface of pre-B-cells. This is Pre-B lymphocyte protein 3 (VPREB3) from Homo sapiens (Human).